We begin with the raw amino-acid sequence, 92 residues long: C-C motif chemokine 3 (92 aa).

The signal sequence occupies residues 1–23; sequence MQVSTAALAVLLCTMALCNQFSA. Disulfide bonds link Cys33/Cys57 and Cys34/Cys73.

Belongs to the intercrine beta (chemokine CC) family. Self-associates. Also heterodimer of MIP-1-alpha(4-69) and MIP-1-beta(3-69). Interacts with CCR1. N-terminal processed form LD78-alpha(4-69) is produced by proteolytic cleavage after secretion from HTLV1-transformed T-cells.

It is found in the secreted. In terms of biological role, monokine with inflammatory and chemokinetic properties. Binds to CCR1, CCR4 and CCR5. One of the major HIV-suppressive factors produced by CD8+ T-cells. Recombinant MIP-1-alpha induces a dose-dependent inhibition of different strains of HIV-1, HIV-2, and simian immunodeficiency virus (SIV). The polypeptide is C-C motif chemokine 3 (CCL3) (Homo sapiens (Human)).